Reading from the N-terminus, the 504-residue chain is Carnosic acid synthase (504 aa).

A helical membrane pass occupies residues 4–24 (FIILSLAFIAAWVVYSRWSEY). C447 serves as a coordination point for heme.

It belongs to the cytochrome P450 family. Heme serves as cofactor. In terms of tissue distribution, expressed in glandular trichomes of young leaves.

Its subcellular location is the membrane. It catalyses the reaction 11-hydroxyferruginol + 3 reduced [NADPH--hemoprotein reductase] + 3 O2 = carnosate + 3 oxidized [NADPH--hemoprotein reductase] + 4 H2O + 4 H(+). It carries out the reaction miltiradiene + 2 reduced [NADPH--hemoprotein reductase] + 2 O2 = miltiradien-20-al + 2 oxidized [NADPH--hemoprotein reductase] + 3 H2O + 2 H(+). The enzyme catalyses ferruginol + 3 reduced [NADPH--hemoprotein reductase] + 3 O2 = pisiferate + 3 oxidized [NADPH--hemoprotein reductase] + 4 H2O + 4 H(+). The protein operates within secondary metabolite biosynthesis; terpenoid biosynthesis. Monooxygenase involved in the biosynthesis of carnosate, a potent antioxidant labdane-related diterpene natural products. Catalyzes the oxidation of 11-hydroxyferruginol to produce carnosate. Mediates the conversion of miltiradien into miltiradien-20-al. Also involved in the production of pisiferic acid and derivative products from ferruginol. The chain is Carnosic acid synthase from Rosmarinus officinalis (Rosemary).